The primary structure comprises 70 residues: Large ribosomal subunit protein bL31 (70 aa).

Residues cysteine 16, cysteine 18, cysteine 37, and cysteine 40 each contribute to the Zn(2+) site.

This sequence belongs to the bacterial ribosomal protein bL31 family. Type A subfamily. As to quaternary structure, part of the 50S ribosomal subunit. Requires Zn(2+) as cofactor.

In terms of biological role, binds the 23S rRNA. The sequence is that of Large ribosomal subunit protein bL31 from Desulfovibrio desulfuricans (strain ATCC 27774 / DSM 6949 / MB).